A 666-amino-acid polypeptide reads, in one-letter code: Phosphoenolpyruvate carboxykinase (ATP) (666 aa).

Disordered regions lie at residues 1-68 (MATP…AHSP) and 91-132 (ASLT…HPAA). A compositionally biased stretch (polar residues) spans 48 to 58 (APTTPNRSAPT). The span at 109–123 (KGEAAAQGAPSTPRA) shows a compositional bias: low complexity. Position 364-371 (364-371 (GLSGTGKT)) interacts with ATP.

The protein belongs to the phosphoenolpyruvate carboxykinase (ATP) family.

Its subcellular location is the cytoplasm. The catalysed reaction is oxaloacetate + ATP = phosphoenolpyruvate + ADP + CO2. The protein operates within carbohydrate biosynthesis; gluconeogenesis. The sequence is that of Phosphoenolpyruvate carboxykinase (ATP) from Zea mays (Maize).